A 484-amino-acid polypeptide reads, in one-letter code: 6-phosphogluconate dehydrogenase, decarboxylating (484 aa).

NADP(+) contacts are provided by residues 11–16 (GLAVMG), 34–36 (NRT), 76–78 (VRA), and Asn104. Substrate is bound by residues Asn104 and 130 to 132 (SGG). Residue Lys185 is the Proton acceptor of the active site. 188–189 (HN) serves as a coordination point for substrate. Residue Glu192 is the Proton donor of the active site. Substrate contacts are provided by Tyr193, Lys262, Arg289, Arg447, and His453.

Belongs to the 6-phosphogluconate dehydrogenase family. As to quaternary structure, homodimer.

The catalysed reaction is 6-phospho-D-gluconate + NADP(+) = D-ribulose 5-phosphate + CO2 + NADPH. Its pathway is carbohydrate degradation; pentose phosphate pathway; D-ribulose 5-phosphate from D-glucose 6-phosphate (oxidative stage): step 3/3. Its function is as follows. Catalyzes the oxidative decarboxylation of 6-phosphogluconate to ribulose 5-phosphate and CO(2), with concomitant reduction of NADP to NADPH. The chain is 6-phosphogluconate dehydrogenase, decarboxylating (gnd) from Haemophilus influenzae (strain ATCC 51907 / DSM 11121 / KW20 / Rd).